We begin with the raw amino-acid sequence, 408 residues long: DNA primase DnaG (408 aa).

Positions 165–243 (PELIIVEGRA…KIDYVARAPT (79 aa)) constitute a Toprim domain. Glu-171, Asp-216, and Asp-218 together coordinate Mg(2+).

Belongs to the archaeal DnaG primase family. As to quaternary structure, forms a ternary complex with MCM helicase and DNA. Component of the archaeal exosome complex. The cofactor is Mg(2+).

It carries out the reaction ssDNA + n NTP = ssDNA/pppN(pN)n-1 hybrid + (n-1) diphosphate.. In terms of biological role, RNA polymerase that catalyzes the synthesis of short RNA molecules used as primers for DNA polymerase during DNA replication. Also part of the exosome, which is a complex involved in RNA degradation. Acts as a poly(A)-binding protein that enhances the interaction between heteromeric, adenine-rich transcripts and the exosome. In Sulfurisphaera tokodaii (strain DSM 16993 / JCM 10545 / NBRC 100140 / 7) (Sulfolobus tokodaii), this protein is DNA primase DnaG.